The following is a 798-amino-acid chain: Putative antiporter subunit mnhA2 (798 aa).

The next 21 membrane-spanning stretches (helical) occupy residues 1-21, 33-53, 78-98, 109-129, 133-153, 167-187, 209-229, 241-261, 272-292, 300-320, 337-357, 381-401, 431-451, 472-492, 526-546, 593-613, 625-645, 649-669, 674-694, 710-730, and 766-786; these read MSLVYLLSTLILIMVILLFTL, IALLAPIVASVYFLYQLPSVM, GLSLFFSLLISLIGLAVVYYA, LPRFYVYLLLFMFSMLGIVTA, ILMYVFWELTSVSSFLLIVYW, FMITVFGGLALLAGFIMIYIV, FIPIIILLLLGAFTKSAQFPF, TPVSAYLHSATMVKAGIFLLF, FYIYSVTFVGLITMIFGAVNA, AILAYSTISQLGMIVSMVGLG, MILFAALFHLMNHALYKGALF, VFPITHIVMLLSALSMAGIPF, IITVIGVIASIFTLVYGVYMI, PFLFTLPSAIMMILLPVIFFI, GFNLPLILSLIVIVVGFIMAL, ITITLLIFSMVVIYGMIQAGF, GPIEVITLIVVFVLGIALTFI, LTMVVLNGIIGYCVTIFFILM, LALTQLVVETITTILFIVSFS, AVKIIVSLLMAVIVVTLVFIA, and IDTLFEGMVLIIAGLGIYTLL.

This sequence belongs to the CPA3 antiporters (TC 2.A.63) subunit A family. In terms of assembly, may form a heterooligomeric complex that consists of seven subunits: mnhA2, mnhB2, mnhC2, mnhD2, mnhE2, mnhF2 and mnhG2.

It is found in the cell membrane. The sequence is that of Putative antiporter subunit mnhA2 (mnhA2) from Staphylococcus saprophyticus subsp. saprophyticus (strain ATCC 15305 / DSM 20229 / NCIMB 8711 / NCTC 7292 / S-41).